Here is a 229-residue protein sequence, read N- to C-terminus: UPF0758 protein Mbur_0382 (229 aa).

The region spanning 106–228 is the MPN domain; it reads KIRSANDVYS…YVSLKEEGYI (123 aa). His177, His179, and Asp190 together coordinate Zn(2+). The short motif at 177–190 is the JAMM motif element; that stretch reads HNHPSGDPAPSRED.

The protein belongs to the UPF0758 family.

The protein is UPF0758 protein Mbur_0382 of Methanococcoides burtonii (strain DSM 6242 / NBRC 107633 / OCM 468 / ACE-M).